The primary structure comprises 663 residues: Sodium/potassium/calcium exchanger 1 (663 aa).

Residues 32–128 (SPSAIPALLT…DLFSVEERRQ (97 aa)) lie on the Extracellular side of the membrane. Asparagine 59, asparagine 66, and asparagine 100 each carry an N-linked (GlcNAc...) asparagine glycan. Residues 129-149 (GWVVLHIFGMMYVFVALAIVC) traverse the membrane as a helical segment. The Cytoplasmic portion of the chain corresponds to 150-173 (DEYFVPALGVITEKLQISEDVAGA). The stretch at 170–210 (VAGATFMAAGGSAPELFTSLIGVFISHSNVGIGTIVGSAVF) is one Alpha-1 repeat. A helical membrane pass occupies residues 174 to 194 (TFMAAGGSAPELFTSLIGVFI). Topologically, residues 195–200 (SHSNVG) are extracellular. Residues 201 to 221 (IGTIVGSAVFNILFVIGTCAL) traverse the membrane as a helical segment. Residues 222–228 (FSREILH) lie on the Cytoplasmic side of the membrane. Residues 229–253 (LTWWPLFRDISFYIVDLLMLILFFL) form a helical membrane-spanning segment. Over 254–259 (DSVIDW) the chain is Extracellular. The chain crosses the membrane as a helical span at residues 260–276 (WESLLLLTAYATYVFTM). At 277–471 (KHNVSLEQWV…SLEWPETRKK (195 aa)) the chain is on the cytoplasmic side. Disordered stretches follow at residues 308–343 (KSSV…SLHN) and 384–465 (LTGQ…SLEW). Residues 316–325 (DGTKPADGKK) show a composition bias toward basic and acidic residues. Composition is skewed to polar residues over residues 327–343 (QPTT…SLHN) and 399–412 (ASQN…ASDS). Serine 337 is modified (phosphoserine). Over residues 413–423 (EPSKDKQKEDT) the composition is skewed to basic and acidic residues. A compositionally biased stretch (acidic residues) spans 434 to 461 (DNSEDSSSDSEDDSDDDSTDDEENDEPL). Residues 472–492 (QAIYLFLFPIVFPLWSTIPDV) traverse the membrane as a helical segment. Residues 493-499 (RNPDSKK) lie on the Extracellular side of the membrane. The chain crosses the membrane as a helical span at residues 500–520 (FFVITFFGSIIWIAAFSYLMV). Residues 521 to 535 (WWAHQVGETIGISEE) are Cytoplasmic-facing. Residues 536-556 (IMGLTILAAGTSIPDLITSVI) traverse the membrane as a helical segment. The stretch at 543 to 574 (AAGTSIPDLITSVIVARKGLGDMAVSSSVGSN) is one Alpha-2 repeat. Residues 557–574 (VARKGLGDMAVSSSVGSN) lie on the Extracellular side of the membrane. A helical transmembrane segment spans residues 575-595 (IFDITVGLPVPWFLYSVFNGF). The Cytoplasmic portion of the chain corresponds to 596 to 604 (SPVAVSSNG). Residues 605-625 (LFCAIVLLFLMLLFVIISIAL) form a helical membrane-spanning segment. Residues 626-632 (CKWKMNK) are Extracellular-facing. A helical membrane pass occupies residues 633-653 (ILGVTMFALYFVFLIISVMLE). Residues 654-663 (DRIISCPVSV) are Cytoplasmic-facing.

It belongs to the Ca(2+):cation antiporter (CaCA) (TC 2.A.19) family. SLC24A subfamily. In terms of processing, the uncleaved signal sequence is required for efficient membrane targeting and proper membrane integration and topology. As to expression, retinal rods. Localizes to the inner segment of rod photoreceptors.

It localises to the cell membrane. It catalyses the reaction Ca(2+)(out) + K(+)(out) + 4 Na(+)(in) = Ca(2+)(in) + K(+)(in) + 4 Na(+)(out). Calcium, potassium:sodium antiporter that transports 1 Ca(2+) and 1 K(+) in exchange for 4 Na(+). Critical component of the visual transduction cascade, controlling the calcium concentration of outer segments during light and darkness. Light causes a rapid lowering of cytosolic free calcium in the outer segment of both retinal rod and cone photoreceptors and the light-induced lowering of calcium is caused by extrusion via this protein which plays a key role in the process of light adaptation. In Gallus gallus (Chicken), this protein is Sodium/potassium/calcium exchanger 1 (SLC24A1).